A 188-amino-acid polypeptide reads, in one-letter code: Photosystem I assembly protein Ycf4 (188 aa).

A run of 2 helical transmembrane segments spans residues 26–48 (FFWA…SSYF) and 63–85 (FIPQ…GYLW).

It belongs to the Ycf4 family.

The protein resides in the cellular thylakoid membrane. Its function is as follows. Seems to be required for the assembly of the photosystem I complex. This chain is Photosystem I assembly protein Ycf4, found in Synechocystis sp. (strain ATCC 27184 / PCC 6803 / Kazusa).